The following is a 184-amino-acid chain: Oocyte-secreted protein 4A (184 aa).

The N-terminal stretch at 1–19 (MKISCVLGKLLMLFELIHG) is a signal peptide. N128 carries N-linked (GlcNAc...) asparagine glycosylation.

Belongs to the PLAC1 family.

It is found in the secreted. In Homo sapiens (Human), this protein is Oocyte-secreted protein 4A.